Reading from the N-terminus, the 459-residue chain is MIKVRFAPSPTGYIHIGNIRIALFNWLYAQAHNGTFILRYDNTDVERSKQEYIDAIAVDLEWLGIQPDEIYYQSKRFNRYDEVAEILKQRGLLYPCYETAEELDRRRKIQLSRKLPPVYDRAALKLTPEKKREFETQGRKPHWRFLLPNFENDPLQKKRTEVCWNDAVKGKQTIDLASLSDPVLIREDGSYLYTLPSVVDDIDMAITHIIRGDDHITNTGAQIALFEALNAKLPTFGHINLLTTLLGKGLSKRNNDLSIHSLRADGFESIAVQCLAVLIGTSQNVHPYPNQAVLLEHFNLQDTSRSVAKFDIADLLTLNSHFVHELTYEEVKKRLENLSINGEKVECFWNAIRSNINKVNDAVLWWKMLHDEQNFDTVALEDRAFVRQSLNLLPEGTLNEESWKVWTVALKEKTGRRGKALFMPLRQALTGMDHGPEMGKILQLLGREKVIERLIIQGE.

Positions 8–18 match the 'HIGH' region motif; that stretch reads PSPTGYIHIGN. A 'KMSKS' region motif is present at residues 249 to 253; that stretch reads GLSKR. An ATP-binding site is contributed by lysine 252.

It belongs to the class-I aminoacyl-tRNA synthetase family. Glutamate--tRNA ligase type 1 subfamily. In terms of assembly, monomer.

It localises to the cytoplasm. The enzyme catalyses tRNA(Glu) + L-glutamate + ATP = L-glutamyl-tRNA(Glu) + AMP + diphosphate. Its function is as follows. Catalyzes the attachment of glutamate to tRNA(Glu) in a two-step reaction: glutamate is first activated by ATP to form Glu-AMP and then transferred to the acceptor end of tRNA(Glu). This chain is Glutamate--tRNA ligase 2, found in Bartonella henselae (strain ATCC 49882 / DSM 28221 / CCUG 30454 / Houston 1) (Rochalimaea henselae).